The primary structure comprises 349 residues: 4-hydroxythreonine-4-phosphate dehydrogenase (349 aa).

The substrate site is built by histidine 141 and threonine 142. A divalent metal cation is bound by residues histidine 176, histidine 221, and histidine 276. Substrate contacts are provided by lysine 284, asparagine 293, and arginine 302.

Belongs to the PdxA family. As to quaternary structure, homodimer. Requires Zn(2+) as cofactor. Mg(2+) is required as a cofactor. It depends on Co(2+) as a cofactor.

The protein localises to the cytoplasm. The enzyme catalyses 4-(phosphooxy)-L-threonine + NAD(+) = 3-amino-2-oxopropyl phosphate + CO2 + NADH. It functions in the pathway cofactor biosynthesis; pyridoxine 5'-phosphate biosynthesis; pyridoxine 5'-phosphate from D-erythrose 4-phosphate: step 4/5. Functionally, catalyzes the NAD(P)-dependent oxidation of 4-(phosphooxy)-L-threonine (HTP) into 2-amino-3-oxo-4-(phosphooxy)butyric acid which spontaneously decarboxylates to form 3-amino-2-oxopropyl phosphate (AHAP). The polypeptide is 4-hydroxythreonine-4-phosphate dehydrogenase (Methylorubrum populi (strain ATCC BAA-705 / NCIMB 13946 / BJ001) (Methylobacterium populi)).